A 70-amino-acid chain; its full sequence is Putative defensin-like protein 280 (70 aa).

The N-terminal stretch at Met1–Ala23 is a signal peptide. 3 disulfide bridges follow: Cys30–Cys53, Cys39–Cys65, and Cys43–Cys67.

The protein belongs to the DEFL family.

The protein resides in the secreted. In Arabidopsis thaliana (Mouse-ear cress), this protein is Putative defensin-like protein 280.